A 432-amino-acid polypeptide reads, in one-letter code: Enolase (432 aa).

Glutamine 167 serves as a coordination point for (2R)-2-phosphoglycerate. The Proton donor role is filled by glutamate 209. 3 residues coordinate Mg(2+): aspartate 246, glutamate 291, and aspartate 318. Residues lysine 343, arginine 372, serine 373, and lysine 394 each coordinate (2R)-2-phosphoglycerate. Catalysis depends on lysine 343, which acts as the Proton acceptor.

Belongs to the enolase family. In terms of assembly, component of the RNA degradosome, a multiprotein complex involved in RNA processing and mRNA degradation. It depends on Mg(2+) as a cofactor.

It is found in the cytoplasm. The protein resides in the secreted. The protein localises to the cell surface. It carries out the reaction (2R)-2-phosphoglycerate = phosphoenolpyruvate + H2O. It functions in the pathway carbohydrate degradation; glycolysis; pyruvate from D-glyceraldehyde 3-phosphate: step 4/5. Functionally, catalyzes the reversible conversion of 2-phosphoglycerate (2-PG) into phosphoenolpyruvate (PEP). It is essential for the degradation of carbohydrates via glycolysis. The protein is Enolase of Buchnera aphidicola subsp. Cinara cedri (strain Cc).